Reading from the N-terminus, the 244-residue chain is Protein TIFY 10b (244 aa).

Positions 97 to 132 (QEPEKRQLTIFYGGKVLVFNDFPADKAKGLMQLASK) constitute a Tify domain. Residues 174 to 244 (QKPARANASD…AVVKPIERGQ (71 aa)) are disordered. The short motif at 185-210 (PIARKASLHRFLEKRKDRLNAKTPYQ) is the Jas element. The short motif at 187 to 194 (ARKASLHR) is the Nuclear localization signal element. Over residues 194–204 (RFLEKRKDRLN) the composition is skewed to basic and acidic residues.

It belongs to the TIFY/JAZ family. As to quaternary structure, interacts with BHLH148. Interacts with COI1A and COI1B in a coronatine-dependent manner. Coronatine is an analog of jasmonoyl isoleucine (JA-Ile). In terms of processing, ubiquitinated. Targeted for degradation by the SCF(COI1) E3 ubiquitin ligase-proteasome pathway during jasmonate signaling.

It is found in the nucleus. Repressor of jasmonate responses. This chain is Protein TIFY 10b, found in Oryza sativa subsp. japonica (Rice).